Reading from the N-terminus, the 186-residue chain is Ribosome-recycling factor (186 aa).

Belongs to the RRF family.

It localises to the cytoplasm. Its function is as follows. Responsible for the release of ribosomes from messenger RNA at the termination of protein biosynthesis. May increase the efficiency of translation by recycling ribosomes from one round of translation to another. This Methylocella silvestris (strain DSM 15510 / CIP 108128 / LMG 27833 / NCIMB 13906 / BL2) protein is Ribosome-recycling factor.